The chain runs to 299 residues: MRVFFFGGKGGVGKTTASSAFAVKLSEQGKKVLLLSTDPAHSLSDVFNTELQGETKLSENLTVKEIDLNEELKEYRSRVFKLAEATLRKETLRELEGIIHSLEESPGIEDVVIFEALSKEVVYRENEYDYIVVDTAPTGHTLGLLKTVRNLGNFLEEIVKLKEKVYELKKLSGKSVHEEALEYLKERKERFKKFSEIIYDKSYFFAVLTPEKLPFEETKRLVNSLKHYGIRVKALIINKVLPENPQDEFLKARKEVEKKFLKEIENYFMDIEKISIPYQKEEVVGYEKLKEFSKFLPLG.

8 to 15 is a binding site for ATP; it reads GKGGVGKT.

It belongs to the arsA ATPase family.

The enzyme catalyses arsenite(in) + ATP + H2O = arsenite(out) + ADP + phosphate + H(+). Functionally, anion-transporting ATPase. Catalyzes the extrusion of arsenite. This Aquifex aeolicus (strain VF5) protein is Putative arsenical pump-driving ATPase 2 (arsA2).